The chain runs to 248 residues: Phosphatidylglycerol--prolipoprotein diacylglyceryl transferase (248 aa).

A run of 3 helical transmembrane segments spans residues 6–26, 48–68, and 84–104; these read FSIF…GVIL, ILVW…VIFE, and GGGL…YVIC. R130 serves as a coordination point for a 1,2-diacyl-sn-glycero-3-phospho-(1'-sn-glycerol). 2 consecutive transmembrane segments (helical) span residues 187 to 207 and 214 to 234; these read GQIT…VEGL and IGAL…GVIL.

Belongs to the Lgt family.

Its subcellular location is the cell membrane. The catalysed reaction is L-cysteinyl-[prolipoprotein] + a 1,2-diacyl-sn-glycero-3-phospho-(1'-sn-glycerol) = an S-1,2-diacyl-sn-glyceryl-L-cysteinyl-[prolipoprotein] + sn-glycerol 1-phosphate + H(+). The protein operates within protein modification; lipoprotein biosynthesis (diacylglyceryl transfer). Catalyzes the transfer of the diacylglyceryl group from phosphatidylglycerol to the sulfhydryl group of the N-terminal cysteine of a prolipoprotein, the first step in the formation of mature lipoproteins. This Finegoldia magna (strain ATCC 29328 / DSM 20472 / WAL 2508) (Peptostreptococcus magnus) protein is Phosphatidylglycerol--prolipoprotein diacylglyceryl transferase.